Reading from the N-terminus, the 429-residue chain is Glutamate-1-semialdehyde 2,1-aminomutase (429 aa).

The residue at position 270 (K270) is an N6-(pyridoxal phosphate)lysine.

This sequence belongs to the class-III pyridoxal-phosphate-dependent aminotransferase family. HemL subfamily. In terms of assembly, homodimer. Pyridoxal 5'-phosphate is required as a cofactor.

Its subcellular location is the cytoplasm. The catalysed reaction is (S)-4-amino-5-oxopentanoate = 5-aminolevulinate. It functions in the pathway porphyrin-containing compound metabolism; protoporphyrin-IX biosynthesis; 5-aminolevulinate from L-glutamyl-tRNA(Glu): step 2/2. This is Glutamate-1-semialdehyde 2,1-aminomutase from Cupriavidus pinatubonensis (strain JMP 134 / LMG 1197) (Cupriavidus necator (strain JMP 134)).